The primary structure comprises 221 residues: MSANDKQYISYNNVHQLCQVSAERIKNFKPDLIIAIGGGGFIPARILRTFLKEPGVPTIRIFAIILSLYEDLNSVGSEVEEVGVKVSRTQWIDYEQCKLDLVGKNVLIVDEVDDTRTTLHYALSELEKDAAEQAKAKGIDTEKSPEMKTNFGIFVLHDKQKPKKADLPAEMLNDKNRYFAAKTVPDKWYAYPWESTDIVFHTRMAIEQGNDIFIPEQEHKQ.

Ser2 is subject to N-acetylserine. Residues Lys85, 110 to 118 (DEVDDTRTT), Lys159, and 188 to 194 (WYAYPWE) contribute to the GMP site. Asp114 (proton acceptor) is an active-site residue.

Belongs to the purine/pyrimidine phosphoribosyltransferase family. In terms of assembly, dimer. Mg(2+) serves as cofactor.

It is found in the cytoplasm. It localises to the nucleus. It carries out the reaction IMP + diphosphate = hypoxanthine + 5-phospho-alpha-D-ribose 1-diphosphate. It catalyses the reaction GMP + diphosphate = guanine + 5-phospho-alpha-D-ribose 1-diphosphate. The protein operates within purine metabolism; IMP biosynthesis via salvage pathway; IMP from hypoxanthine: step 1/1. Its activity is regulated as follows. Subject to feedback inhibition by GMP. Converts guanine to guanosine monophosphate, and hypoxanthine to inosine monophosphate. Transfers the 5-phosphoribosyl group from 5-phosphoribosylpyrophosphate onto the purine. Plays a central role in the generation of purine nucleotides through the purine salvage pathway. In Saccharomyces cerevisiae (strain ATCC 204508 / S288c) (Baker's yeast), this protein is Hypoxanthine-guanine phosphoribosyltransferase (HPT1).